The following is a 459-amino-acid chain: ATP-dependent 6-phosphofructokinase (459 aa).

ATP contacts are provided by residues G89, 154-155, and 179-182; these read RG and GDGG. Position 180 (D180) interacts with Mg(2+). Substrate contacts are provided by residues 208 to 210, 253 to 255, E309, and 368 to 371; these read TID, MGR, and YAIR. D210 functions as the Proton acceptor in the catalytic mechanism.

This sequence belongs to the phosphofructokinase type A (PFKA) family. PPi-dependent PFK group II subfamily. Atypical ATP-dependent clade 'X' sub-subfamily. As to quaternary structure, homodimer. Mg(2+) is required as a cofactor.

It is found in the cytoplasm. It carries out the reaction beta-D-fructose 6-phosphate + ATP = beta-D-fructose 1,6-bisphosphate + ADP + H(+). Its pathway is carbohydrate degradation; glycolysis; D-glyceraldehyde 3-phosphate and glycerone phosphate from D-glucose: step 3/4. AMP causes 20-40% inhibition and diphosphate causes 20-50% inhibition. ADP, citrate, PEP and FBP have no effect. In terms of biological role, catalyzes the phosphorylation of D-fructose 6-phosphate to fructose 1,6-bisphosphate by ATP, the first committing step of glycolysis. The chain is ATP-dependent 6-phosphofructokinase from Amycolatopsis methanolica.